The sequence spans 346 residues: UDP-3-O-acylglucosamine N-acyltransferase (346 aa).

His253 (proton acceptor) is an active-site residue.

It belongs to the transferase hexapeptide repeat family. LpxD subfamily. In terms of assembly, homotrimer.

It catalyses the reaction a UDP-3-O-[(3R)-3-hydroxyacyl]-alpha-D-glucosamine + a (3R)-hydroxyacyl-[ACP] = a UDP-2-N,3-O-bis[(3R)-3-hydroxyacyl]-alpha-D-glucosamine + holo-[ACP] + H(+). Its pathway is bacterial outer membrane biogenesis; LPS lipid A biosynthesis. In terms of biological role, catalyzes the N-acylation of UDP-3-O-acylglucosamine using 3-hydroxyacyl-ACP as the acyl donor. Is involved in the biosynthesis of lipid A, a phosphorylated glycolipid that anchors the lipopolysaccharide to the outer membrane of the cell. The chain is UDP-3-O-acylglucosamine N-acyltransferase from Rickettsia prowazekii (strain Madrid E).